Consider the following 348-residue polypeptide: Rhodopsin (348 aa).

The Extracellular portion of the chain corresponds to 1–33 (TEGPYFYVPMVNTTGIVRSPYEYPQYYLVNPAA). Asparagine 12 carries an N-linked (GlcNAc...) asparagine glycan. Residues 34 to 58 (FAILGAYMFFLIIVGFPVNFMTLYV) traverse the membrane as a helical segment. Residues 59–70 (TLEHKKLRTPLN) are Cytoplasmic-facing. A helical transmembrane segment spans residues 71–93 (YILLNLAVADLFMVIGGFTTTMY). At 94–107 (TSMHGYFVLGRLGC) the chain is on the extracellular side. Cysteine 107 and cysteine 184 are oxidised to a cystine. Residues 108–130 (NLEGFFATLGGMISLWSLAVLAI) traverse the membrane as a helical segment. The short motif at 131–133 (ERW) is the 'Ionic lock' involved in activated form stabilization element. Over 131–149 (ERWVVVCKPISNFRFGENH) the chain is Cytoplasmic. A helical membrane pass occupies residues 150-170 (AIMGVSLTWGMALACTVPPLV). At 171-199 (GWSRYIPEGMQCSCGIDYYTRAEGFNNET) the chain is on the extracellular side. An N-linked (GlcNAc...) asparagine glycan is attached at asparagine 197. Residues 200 to 221 (FVLYMFCCHFTVPLTIIFFCYG) form a helical membrane-spanning segment. Over 222–249 (RLLCAVKEAAAAQQESETTQRAEREVTR) the chain is Cytoplasmic. A helical transmembrane segment spans residues 250–271 (MVVIMVIGFLVCWLPYASVAWF). The Extracellular segment spans residues 272 to 283 (VFTHQGSEFGPL). The helical transmembrane segment at 284-305 (FMTIPAFFAKSSAIYNPMIYIC) threads the bilayer. An N6-(retinylidene)lysine modification is found at lysine 293. Residues 306–348 (MNKQFRHCMITTLFCGKNPFEGEEEGASSTKTEASSASSVSPA) lie on the Cytoplasmic side of the membrane. Cysteine 320 carries the S-palmitoyl cysteine lipid modification. Residues 327 to 348 (GEEEGASSTKTEASSASSVSPA) are disordered. Low complexity predominate over residues 332 to 348 (ASSTKTEASSASSVSPA).

It belongs to the G-protein coupled receptor 1 family. Opsin subfamily. Post-translationally, phosphorylated on some or all of the serine and threonine residues present in the C-terminal region. In terms of processing, contains one covalently linked retinal chromophore.

It localises to the membrane. Its subcellular location is the cell projection. The protein resides in the cilium. It is found in the photoreceptor outer segment. Photoreceptor required for image-forming vision at low light intensity. While most salt water fish species use retinal as chromophore, most freshwater fish use 3-dehydroretinal, or a mixture of retinal and 3-dehydroretinal. Light-induced isomerization of 11-cis to all-trans retinal triggers a conformational change that activates signaling via G-proteins. Subsequent receptor phosphorylation mediates displacement of the bound G-protein alpha subunit by arrestin and terminates signaling. The protein is Rhodopsin (rho) of Sargocentron xantherythrum (Hawaiian squirrelfish).